The chain runs to 183 residues: CASP-like protein UU2 (183 aa).

Residues 1–33 (MEESQQQSSKFDAPPSPYVPSRVYLAQIYWKKP) are Cytoplasmic-facing. Residues 34–54 (AIVVLRVLQFIFSLIAFSVMA) traverse the membrane as a helical segment. Residues 55–72 (DVLHDVQGSIKSLSYTVA) are Extracellular-facing. The helical transmembrane segment at 73–93 (IGVLACAYALAQLSFSLWCVI) threads the bilayer. Topologically, residues 94 to 118 (RGATSSAGVTPLYQYATFICDQMST) are cytoplasmic. A helical membrane pass occupies residues 119–139 (YFLISAASATATLIDVSGVCG). Residues 140–156 (SNGSGTNLCSRSTASVT) lie on the Extracellular side of the membrane. An N-linked (GlcNAc...) asparagine glycan is attached at Asn141. The chain crosses the membrane as a helical span at residues 157 to 177 (FAFLAFLAFSASSVLTGYYLV). Over 178–183 (KCILKA) the chain is Cytoplasmic.

It belongs to the Casparian strip membrane proteins (CASP) family. As to quaternary structure, homodimer and heterodimers.

The protein resides in the cell membrane. The sequence is that of CASP-like protein UU2 from Selaginella moellendorffii (Spikemoss).